Here is a 264-residue protein sequence, read N- to C-terminus: uncharacterized protein (264 aa).

Positions 1-20 (MENIEKKCQPETINEDNNDE) are disordered.

It belongs to the mimivirus R73/L269/L862 family.

This is an uncharacterized protein from Acanthamoeba polyphaga mimivirus (APMV).